Here is a 352-residue protein sequence, read N- to C-terminus: MGGLYSEYLNPEKVQEHYNYTKETLDMQETPSRKVASAFIIILCCAIVVENLLVLIAVARNSKFHSAMYLFLGNLAASDLLAGVAFVANTLLSGPVTLSLTPLQWFAREGSAFITLSASVFSLLAIAIERQVAIAKVKLYGSDKSCRMLMLIGASWLISLILGGLPILGWNCLDHLEACSTVLPLYAKHYVLCVVTIFSVILLAIVALYVRIYFVVRSSHADVAGPQTLALLKTVTIVLGVFIICWLPAFSILLLDSTCPVRACPVLYKAHYFFAFATLNSLLNPVIYTWRSRDLRREVLRPLLCWRQGKGATGRRGGNPGHRLLPLRSSSSLERGLHMPTSPTFLEGNTVV.

The Extracellular segment spans residues 1 to 34 (MGGLYSEYLNPEKVQEHYNYTKETLDMQETPSRK). An N-linked (GlcNAc...) asparagine glycan is attached at asparagine 19. The chain crosses the membrane as a helical span at residues 35 to 59 (VASAFIIILCCAIVVENLLVLIAVA). The Cytoplasmic portion of the chain corresponds to 60–66 (RNSKFHS). Residues 67-95 (AMYLFLGNLAASDLLAGVAFVANTLLSGP) traverse the membrane as a helical segment. The Extracellular portion of the chain corresponds to 96–109 (VTLSLTPLQWFARE). Residues 110 to 128 (GSAFITLSASVFSLLAIAI) form a helical membrane-spanning segment. The Cytoplasmic segment spans residues 129-147 (ERQVAIAKVKLYGSDKSCR). The chain crosses the membrane as a helical span at residues 148–173 (MLMLIGASWLISLILGGLPILGWNCL). Residues 174-189 (DHLEACSTVLPLYAKH) are Extracellular-facing. A helical membrane pass occupies residues 190–210 (YVLCVVTIFSVILLAIVALYV). Over 211–233 (RIYFVVRSSHADVAGPQTLALLK) the chain is Cytoplasmic. A helical transmembrane segment spans residues 234-255 (TVTIVLGVFIICWLPAFSILLL). Topologically, residues 256-271 (DSTCPVRACPVLYKAH) are extracellular. A helical membrane pass occupies residues 272-292 (YFFAFATLNSLLNPVIYTWRS). Topologically, residues 293–352 (RDLRREVLRPLLCWRQGKGATGRRGGNPGHRLLPLRSSSSLERGLHMPTSPTFLEGNTVV) are cytoplasmic. Residue cysteine 305 is the site of S-palmitoyl cysteine attachment.

It belongs to the G-protein coupled receptor 1 family. In terms of tissue distribution, expressed in all developing tissues with highest levels detected in primitive, transformed cells. Relative abundance: lung &gt; kidney = skin = gut &gt; spleen &gt; brain &gt; liver.

It is found in the cell membrane. In terms of biological role, receptor for the lysosphingolipid sphingosine 1-phosphate (S1P). S1P is a bioactive lysophospholipid that elicits diverse physiological effects on most types of cells and tissues. Receptor for the chemokine-like protein FAM19A5. Mediates the inhibitory effect of FAM19A5 on vascular smooth muscle cell proliferation and migration. In lymphoid follicles, couples the binding of S1P to the activation of GNA13 and downstream inhibition of AKT activation leading to suppression of germinal center (GC) B cell growth and migration outside the GC niche. This is Sphingosine 1-phosphate receptor 2 (S1pr2) from Rattus norvegicus (Rat).